Here is a 469-residue protein sequence, read N- to C-terminus: Cysteine--tRNA ligase (469 aa).

Cys33 is a binding site for Zn(2+). The 'HIGH' region signature appears at 35-45; that stretch reads ATVQGLPHIGH. Residues Cys211, His236, and Glu240 each contribute to the Zn(2+) site. Positions 267-271 match the 'KMSKS' region motif; that stretch reads KMSKS. Lys270 contacts ATP.

Belongs to the class-I aminoacyl-tRNA synthetase family. Monomer. Zn(2+) is required as a cofactor.

It is found in the cytoplasm. It catalyses the reaction tRNA(Cys) + L-cysteine + ATP = L-cysteinyl-tRNA(Cys) + AMP + diphosphate. This is Cysteine--tRNA ligase (cysS) from Mycobacterium bovis (strain ATCC BAA-935 / AF2122/97).